A 1347-amino-acid chain; its full sequence is Protocadherin-11 X-linked (1347 aa).

Positions 1–23 (MDLLSGTYIFAVLLACVVFHSGA) are cleaved as a signal peptide. The Extracellular segment spans residues 24-812 (QEKNYTIREE…VSSPTSDYVK (789 aa)). 7 Cadherin domains span residues 26 to 139 (KNYT…APLF), 140 to 249 (PATV…HPVF), 250 to 355 (KETE…VPSI), 362 to 466 (NPIN…APVF), 467 to 570 (TQSF…SPVF), 571 to 673 (THNE…KPVF), and 677 to 795 (PSNY…APVT). N-linked (GlcNAc...) asparagine glycosylation is found at asparagine 27, asparagine 48, and asparagine 54. Asparagine 344 carries an N-linked (GlcNAc...) asparagine glycan. Asparagine 553 carries an N-linked (GlcNAc...) asparagine glycan. N-linked (GlcNAc...) asparagine glycosylation occurs at asparagine 773. A helical transmembrane segment spans residues 813–833 (ILVAAVAGTVTVVVVIFITAV). At 834–1347 (VRCRQAPHLK…DSPIMEEHPL (514 aa)) the chain is on the cytoplasmic side. Disordered stretches follow at residues 1031–1050 (IWIH…GKSQ), 1057–1091 (LPEG…GYPQ), 1097–1116 (RATP…ESTF), and 1325–1347 (TFTP…EHPL).

It localises to the cell membrane. Its function is as follows. Potential calcium-dependent cell-adhesion protein. The chain is Protocadherin-11 X-linked (PCDH11X) from Pongo pygmaeus (Bornean orangutan).